A 476-amino-acid chain; its full sequence is Small ribosomal subunit protein mS29 (476 aa).

Residues Met-1 to Tyr-54 constitute a mitochondrion transit peptide. The disordered stretch occupies residues Gly-58 to Thr-97. 2 stretches are compositionally biased toward polar residues: residues Ile-65 to Gln-74 and Pro-86 to Thr-97. Gly-200 to Ser-207 serves as a coordination point for ATP.

It belongs to the mitochondrion-specific ribosomal protein mS29 family. In terms of assembly, component of the mitochondrial small ribosomal subunit (mt-SSU). Mature yeast 74S mitochondrial ribosomes consist of a small (37S) and a large (54S) subunit. The 37S small subunit contains a 15S ribosomal RNA (15S mt-rRNA) and at least 32 different proteins. The 54S large subunit contains a 21S rRNA (21S mt-rRNA) and at least 45 different proteins.

The protein localises to the mitochondrion. In terms of biological role, component of the mitochondrial ribosome (mitoribosome), a dedicated translation machinery responsible for the synthesis of mitochondrial genome-encoded proteins, including at least some of the essential transmembrane subunits of the mitochondrial respiratory chain. The mitoribosomes are attached to the mitochondrial inner membrane and translation products are cotranslationally integrated into the membrane. mS29 binds GTP and is probably an active GTPase. GTP hydrolysis may be linked to subunit association. mS29 also has an extraribosomal function, being required for maintenance of mitochondrial DNA. This chain is Small ribosomal subunit protein mS29 (rsm23), found in Schizosaccharomyces pombe (strain 972 / ATCC 24843) (Fission yeast).